The chain runs to 224 residues: ATP synthase subunit a (224 aa).

Transmembrane regions (helical) follow at residues 17–37 (LSLN…IYWL), 72–92 (IFIS…FPYI), 99–119 (LTLT…YGWI), 125–145 (MFAH…MVCI), 170–190 (LLLT…VTFL), and 195–215 (IALL…FAVL).

The protein belongs to the ATPase A chain family. F-type ATPases have 2 components, CF(1) - the catalytic core - and CF(0) - the membrane proton channel. CF(1) has five subunits: alpha(3), beta(3), gamma(1), delta(1), epsilon(1). CF(0) has three main subunits: a, b and c.

The protein localises to the mitochondrion inner membrane. Mitochondrial membrane ATP synthase (F(1)F(0) ATP synthase or Complex V) produces ATP from ADP in the presence of a proton gradient across the membrane which is generated by electron transport complexes of the respiratory chain. F-type ATPases consist of two structural domains, F(1) - containing the extramembraneous catalytic core and F(0) - containing the membrane proton channel, linked together by a central stalk and a peripheral stalk. During catalysis, ATP synthesis in the catalytic domain of F(1) is coupled via a rotary mechanism of the central stalk subunits to proton translocation. Key component of the proton channel; it may play a direct role in the translocation of protons across the membrane. The polypeptide is ATP synthase subunit a (mt:ATPase6) (Drosophila simulans (Fruit fly)).